Here is a 447-residue protein sequence, read N- to C-terminus: Alpha-1,3-mannosyl-glycoprotein 2-beta-N-acetylglucosaminyltransferase (447 aa).

The Cytoplasmic portion of the chain corresponds to 1-6 (MLKKQS). A helical; Signal-anchor for type II membrane protein membrane pass occupies residues 7–29 (AGLVLWGAIIFVGWNALLLLFFW). At 30-447 (TRPAPGRLPS…TWNGYDPSWN (418 aa)) the chain is on the lumenal side. An intrachain disulfide couples Cys115 to Cys145. Residues Arg117, Asp144, His190, and Asp212 each coordinate substrate. Asp213 is a binding site for Mn(2+). The cysteines at positions 239 and 305 are disulfide-linked. Catalysis depends on Asp291, which acts as the Proton acceptor. Ser322 serves as a coordination point for substrate.

The protein belongs to the glycosyltransferase 13 family. In terms of assembly, interacts with MGAT4D. Interacts with BRI3. It depends on Mn(2+) as a cofactor. As to expression, appears to be present in all tissues.

It localises to the golgi apparatus membrane. The protein localises to the cytoplasm. It is found in the perinuclear region. It carries out the reaction N(4)-(alpha-D-Man-(1-&gt;3)-[alpha-D-Man-(1-&gt;3)-[alpha-D-Man-(1-&gt;6)]-alpha-D-Man-(1-&gt;6)]-beta-D-Man-(1-&gt;4)-beta-D-GlcNAc-(1-&gt;4)-beta-D-GlcNAc)-L-asparaginyl-[protein] (N-glucan mannose isomer 5A1,2) + UDP-N-acetyl-alpha-D-glucosamine = N(4)-{beta-D-GlcNAc-(1-&gt;2)-alpha-D-Man-(1-&gt;3)-[alpha-D-Man-(1-&gt;3)-[alpha-D-Man-(1-&gt;6)]-alpha-D-Man-(1-&gt;6)]-beta-D-Man-(1-&gt;4)-beta-D-GlcNAc-(1-&gt;4)-beta-D-GlcNAc}-L-asparaginyl-[protein] + UDP + H(+). It participates in protein modification; protein glycosylation. Its function is as follows. Initiates complex N-linked carbohydrate formation. Essential for the conversion of high-mannose to hybrid and complex N-glycans. In Rattus norvegicus (Rat), this protein is Alpha-1,3-mannosyl-glycoprotein 2-beta-N-acetylglucosaminyltransferase (Mgat1).